The sequence spans 108 residues: UPF0235 protein RPB_0109 (108 aa).

This sequence belongs to the UPF0235 family.

In Rhodopseudomonas palustris (strain HaA2), this protein is UPF0235 protein RPB_0109.